Reading from the N-terminus, the 593-residue chain is A-type ATP synthase subunit A (593 aa).

236-243 (GPFGSGKT) lines the ATP pocket.

It belongs to the ATPase alpha/beta chains family. Has multiple subunits with at least A(3), B(3), C, D, E, F, H, I and proteolipid K(x).

The protein localises to the cell membrane. The catalysed reaction is ATP + H2O + 4 H(+)(in) = ADP + phosphate + 5 H(+)(out). Produces ATP from ADP in the presence of a proton gradient across the membrane. The archaeal alpha chain is a catalytic subunit. Its function is as follows. Component of the A-type ATP synthase that produces ATP from ADP in the presence of a proton gradient across the membrane. The A chain is the catalytic subunit. This chain is A-type ATP synthase subunit A, found in Pyrobaculum aerophilum (strain ATCC 51768 / DSM 7523 / JCM 9630 / CIP 104966 / NBRC 100827 / IM2).